Here is a 210-residue protein sequence, read N- to C-terminus: DNA-directed RNA polymerases I, II, and III subunit RPABC1 (210 aa).

Met1 is subject to N-acetylmethionine. Lys81 is covalently cross-linked (Glycyl lysine isopeptide (Lys-Gly) (interchain with G-Cter in SUMO2)).

Belongs to the archaeal Rpo5/eukaryotic RPB5 RNA polymerase subunit family. Component of the RNA polymerase I (Pol I), RNA polymerase II (Pol II) and RNA polymerase III (Pol III) complexes consisting of at least 13, 12 and 17 subunits, respectively. Pol I complex consists of a ten-subunit catalytic core composed of POLR1A/RPA1, POLR1B/RPA2, POLR1C/RPAC1, POLR1D/RPAC2, POLR1H/RPA12, POLR2E/RPABC1, POLR2F/RPABC2, POLR2H/RPABC3, POLR2K/RPABC4 and POLR2L/RPABC5; a mobile stalk subunit POLR1F/RPA43 protruding from the core and additional subunits homologous to general transcription factors POLR1E/RPA49 and POLR1G/RPA34. Part of Pol I pre-initiation complex (PIC), in which Pol I core assembles with RRN3 and promoter-bound UTBF and SL1/TIF-IB complex. Pol II complex contains a ten-subunit catalytic core composed of POLR2A/RPB1, POLR2B/RPB2, POLR2C/RPB3, POLR2I/RPB9, POLR2J/RPB11, POLR2E/RPABC1, POLR2F/RPABC2, POLR2H/RPABC3, POLR2K/RPABC4 and POLR2L/RPABC5 and a mobile stalk composed of two subunits POLR2D/RPB4 and POLR2G/RPB7. Part of Pol II(G) complex, in which Pol II core associates with an additional subunit POLR2M; unlike conventional Pol II, Pol II(G) functions as a transcriptional repressor. Part of TBP-based Pol II pre-initiation complex (PIC), in which Pol II core assembles with general transcription factors and other specific initiation factors including GTF2E1, GTF2E2, GTF2F1, GTF2F2, TCEA1, ERCC2, ERCC3, GTF2H2, GTF2H3, GTF2H4, GTF2H5, GTF2A1, GTF2A2, GTF2B and TBP; this large multi-subunit PIC complex mediates DNA unwinding and targets Pol II core to the transcription start site where the first phosphodiester bond forms. In Pol II complex, this subunit is present in 2-fold molar excess over the other subunits. Pol III complex consists of a ten-subunit catalytic core composed of POLR3A/RPC1, POLR3B/RPC2, POLR1C/RPAC1, POLR1D/RPAC2, POLR3K/RPC10, POLR2E/RPABC1, POLR2F/RPABC2, POLR2H/RPABC3, POLR2K/RPABC4 and POLR2L/RPABC5; a mobile stalk composed of two subunits POLR3H/RPC8 and CRCP/RPC9, protruding from the core and functioning primarily in transcription initiation; and additional subunits homologous to general transcription factors of the RNA polymerase II machinery, POLR3C/RPC3-POLR3F/RPC6-POLR3G/RPC7 heterotrimer required for transcription initiation and POLR3D/RPC4-POLR3E/RPC5 heterodimer involved in both transcription initiation and termination. Component of the PAQosome complex which is responsible for the biogenesis of several protein complexes and which consists of R2TP complex members RUVBL1, RUVBL2, RPAP3 and PIH1D1, URI complex members PFDN2, PFDN6, PDRG1, UXT and URI1 as well as ASDURF, POLR2E and DNAAF10/WDR92. Interacts with URI1. In terms of assembly, (Microbial infection) Interacts with HBV protein X.

It is found in the nucleus. The protein resides in the nucleolus. Functionally, DNA-dependent RNA polymerase catalyzes the transcription of DNA into RNA using the four ribonucleoside triphosphates as substrates. Common component of RNA polymerases I, II and III which synthesize ribosomal RNA precursors, mRNA precursors and many functional non-coding RNAs, and small RNAs, such as 5S rRNA and tRNAs, respectively. Pol II is the central component of the basal RNA polymerase II transcription machinery. Pols are composed of mobile elements that move relative to each other. In Pol II, POLR2E/RPABC1 is part of the lower jaw surrounding the central large cleft and thought to grab the incoming DNA template. This Homo sapiens (Human) protein is DNA-directed RNA polymerases I, II, and III subunit RPABC1.